Reading from the N-terminus, the 203-residue chain is E3 ubiquitin-protein ligase RNF152 (203 aa).

An RING-type zinc finger spans residues 12–55 (CQICFNYYSPRRRPKLLDCKHTCCSVCLQQMRTSQKDVRCPWCR). The interval 106-165 (ISKERALLPGDMGCRLLPGSQQKSVTVVTIPAEQQPLQGGAPQEAVEEEQDRRGVVKSST) is necessary for interaction with RRAGA. The chain crosses the membrane as a helical span at residues 167–187 (SGVCTVILVACVLVFLLGIVL).

This sequence belongs to the RNF152 family. As to quaternary structure, interacts with RRAGA (inactive GDP-bound form); stimulated by amino acid starvation. Interacts with SEC16A. Ubiquitinated. Autoubiquitinated in vitro, leading to its degradation by the proteasome. Widely expressed.

It is found in the lysosome membrane. It catalyses the reaction S-ubiquitinyl-[E2 ubiquitin-conjugating enzyme]-L-cysteine + [acceptor protein]-L-lysine = [E2 ubiquitin-conjugating enzyme]-L-cysteine + N(6)-ubiquitinyl-[acceptor protein]-L-lysine.. The protein operates within protein modification; protein ubiquitination. Functionally, E3 ubiquitin-protein ligase that acts as a negative regulator of mTORC1 signaling by mediating ubiquitination of RagA/RRAGA and RHEB. Catalyzes 'Lys-63'-linked polyubiquitination of RagA/RRAGA in response to amino acid starvation, thereby regulating mTORC1 signaling. Also mediates monoubiquitination of RHEB, promoting its association with the TSC-TBC complex and subsequent inhibition. Also mediates 'Lys-48'-linked polyubiquitination of target proteins and their subsequent targeting to the proteasome for degradation. Induces apoptosis when overexpressed. The sequence is that of E3 ubiquitin-protein ligase RNF152 from Homo sapiens (Human).